A 426-amino-acid chain; its full sequence is Actin-like protein 6B (426 aa).

The interval T39–M82 is essential for mediating its function in dendritic development; may contribute to neuronal-specific targeting.

Belongs to the actin family. Component of the multiprotein chromatin-remodeling complexes SWI/SNF: SWI/SNF-A (BAF), SWI/SNF-B (PBAF) and related complexes. The canonical complex contains a catalytic subunit (either SMARCA4/BRG1/BAF190A or SMARCA2/BRM/BAF190B) and at least SMARCE1, ACTL6A/BAF53, SMARCC1/BAF155, SMARCC2/BAF170, and SMARCB1/SNF5/BAF47. Other subunits specific to each of the complexes may also be present permitting several possible combinations developmentally and tissue specific. Component of the BAF complex, which includes at least actin (ACTB), ARID1A/BAF250A, ARID1B/BAF250B, SMARCA2/BRM, SMARCA4/BRG1/BAF190A, ACTL6A/BAF53, ACTL6B/BAF53B, SMARCE1/BAF57, SMARCC1/BAF155, SMARCC2/BAF170, SMARCB1/SNF5/INI1, and one or more SMARCD1/BAF60A, SMARCD2/BAF60B, or SMARCD3/BAF60C. Component of neuron-specific chromatin remodeling complex (nBAF complex) composed of at least, ARID1A/BAF250A or ARID1B/BAF250B, SMARCD1/BAF60A or SMARCD2/BAF60B or SMARCD3/BAF60C, SMARCA2/BRM/BAF190B, SMARCA4/BRG1/BAF190A, SMARCB1/BAF47, SMARCC1/BAF155, SMARCE1/BAF57, SMARCC2/BAF170, DPF1/BAF45B, DPF3/BAF45C, ACTL6B/BAF53B and actin (ACTB). Note that the nBAF complex is polymorphic in regard to the ATPase, SMARCA2 and SMARCA4 occupying mutually exclusive positions. May be a component of the SWI/SNF-B (PBAF) chromatin remodeling complex, at least composed of SMARCA4/BRG1, SMARCB1/BAF47/SNF5, ACTL6A/BAF53A or ACTL6B/BAF53B, SMARCE1/BAF57, SMARCD1/BAF60A, SMARCD2/BAF60B, perhaps SMARCD3/BAF60C, SMARCC1/BAF155, SMARCC2/BAF170, PBRM1/BAF180, ARID2/BAF200 and actin.

It is found in the nucleus. Its function is as follows. Involved in transcriptional activation and repression of select genes by chromatin remodeling (alteration of DNA-nucleosome topology). Component of SWI/SNF chromatin remodeling complexes that carry out key enzymatic activities, changing chromatin structure by altering DNA-histone contacts within a nucleosome in an ATP-dependent manner. Belongs to the neuron-specific chromatin remodeling complex (nBAF complex), as such plays a role in remodeling mononucleosomes in an ATP-dependent fashion, and is required for postmitotic neural development and dendritic outgrowth. During neural development a switch from a stem/progenitor to a postmitotic chromatin remodeling mechanism occurs as neurons exit the cell cycle and become committed to their adult state. The transition from proliferating neural stem/progenitor cells to postmitotic neurons requires a switch in subunit composition of the npBAF and nBAF complexes. As neural progenitors exit mitosis and differentiate into neurons, npBAF complexes which contain ACTL6A/BAF53A and PHF10/BAF45A, are exchanged for homologous alternative ACTL6B/BAF53B and DPF1/BAF45B or DPF3/BAF45C subunits in neuron-specific complexes (nBAF). The npBAF complex is essential for the self-renewal/proliferative capacity of the multipotent neural stem cells. The nBAF complex along with CREST plays a role regulating the activity of genes essential for dendrite growth. ACTL6B/BAF53B is not essential for assembly of the nBAF complex but is required for targeting the complex and CREST to the promoter of genes essential for dendritic growth. Essential for neuronal maturation and dendrite development. The protein is Actin-like protein 6B (ACTL6B) of Bos taurus (Bovine).